The following is a 165-amino-acid chain: Deoxyuridine 5'-triphosphate nucleotidohydrolase (165 aa).

This sequence belongs to the dUTPase family. As to quaternary structure, homotrimer. Requires Mg(2+) as cofactor.

The protein localises to the host cytoplasm. It is found in the virion. It catalyses the reaction dUTP + H2O = dUMP + diphosphate + H(+). Functionally, the viral dUTPase may play a role in lowering the dUTP concentration in natural infections to minimize misincorporation of deoxyuridine into the viral DNA and ensure the fidelity of genome replication. In African swine fever virus (isolate Tick/South Africa/Pretoriuskop Pr4/1996) (ASFV), this protein is Deoxyuridine 5'-triphosphate nucleotidohydrolase.